The sequence spans 247 residues: 23S rRNA (guanosine-2'-O-)-methyltransferase RlmB (247 aa).

Glycine 197, isoleucine 217, and leucine 226 together coordinate S-adenosyl-L-methionine.

Belongs to the class IV-like SAM-binding methyltransferase superfamily. RNA methyltransferase TrmH family. RlmB subfamily.

It is found in the cytoplasm. It catalyses the reaction guanosine(2251) in 23S rRNA + S-adenosyl-L-methionine = 2'-O-methylguanosine(2251) in 23S rRNA + S-adenosyl-L-homocysteine + H(+). Specifically methylates the ribose of guanosine 2251 in 23S rRNA. This is 23S rRNA (guanosine-2'-O-)-methyltransferase RlmB from Burkholderia sp.